The primary structure comprises 304 residues: tRNA dimethylallyltransferase (304 aa).

10–17 is an ATP binding site; that stretch reads GPTASGKS. 12-17 contacts substrate; the sequence is TASGKS. An interaction with substrate tRNA region spans residues 35-38; sequence DSRQ.

The protein belongs to the IPP transferase family. Monomer. Requires Mg(2+) as cofactor.

It catalyses the reaction adenosine(37) in tRNA + dimethylallyl diphosphate = N(6)-dimethylallyladenosine(37) in tRNA + diphosphate. Its function is as follows. Catalyzes the transfer of a dimethylallyl group onto the adenine at position 37 in tRNAs that read codons beginning with uridine, leading to the formation of N6-(dimethylallyl)adenosine (i(6)A). The protein is tRNA dimethylallyltransferase of Gloeothece citriformis (strain PCC 7424) (Cyanothece sp. (strain PCC 7424)).